The primary structure comprises 1180 residues: uncharacterized protein (1180 aa).

7 disordered regions span residues 229-280 (RQQG…DTSI), 431-465 (KQPP…PPLK), 484-575 (SRDT…PNMR), 730-758 (GRPL…ASRT), 810-986 (GKAE…ASWD), 1045-1109 (RLQE…ELEM), and 1125-1152 (ERLE…QKEE). Positions 269–279 (QEDETQAEDTS) are enriched in acidic residues. The span at 431–443 (KQPPKEKAHRRGA) shows a compositional bias: basic residues. Residues 486-497 (DTLSPQGSSSLP) are compositionally biased toward polar residues. Over residues 509–518 (SKARHTRVHS) the composition is skewed to basic residues. 3 stretches are compositionally biased toward basic and acidic residues: residues 730–745 (GRPL…DPEP), 826–837 (SHERDLINEAKR), and 846–856 (TKGPKSEREGK). Positions 872–889 (KAKKKLEKKTRPQRKRTQ) are enriched in basic residues. The span at 937 to 959 (QESQVSLDGRSSPSQIATVTGNM) shows a compositional bias: polar residues. 3 stretches are compositionally biased toward basic and acidic residues: residues 960 to 986 (ESKE…ASWD), 1045 to 1106 (RLQE…RQEE), and 1127 to 1152 (LEYQ…QKEE). Residues 988-1171 (LRAERAEMRW…ATKQAQEQAR (184 aa)) adopt a coiled-coil conformation.

This is an uncharacterized protein from Homo sapiens (Human).